Reading from the N-terminus, the 103-residue chain is Integration host factor subunit beta (103 aa).

The segment at 62 to 81 (RNPKTGESVALPGKHVPHFK) is disordered.

It belongs to the bacterial histone-like protein family. As to quaternary structure, heterodimer of an alpha and a beta chain.

This protein is one of the two subunits of integration host factor, a specific DNA-binding protein that functions in genetic recombination as well as in transcriptional and translational control. The sequence is that of Integration host factor subunit beta from Xanthomonas campestris pv. campestris (strain B100).